Here is a 278-residue protein sequence, read N- to C-terminus: Sulfur carrier protein FdhD (278 aa).

The active-site Cysteine persulfide intermediate is the Cys-121. Position 260 to 265 (260 to 265 (FCKPGR)) interacts with Mo-bis(molybdopterin guanine dinucleotide).

It belongs to the FdhD family.

It localises to the cytoplasm. Required for formate dehydrogenase (FDH) activity. Acts as a sulfur carrier protein that transfers sulfur from IscS to the molybdenum cofactor prior to its insertion into FDH. In Salmonella typhi, this protein is Sulfur carrier protein FdhD.